The sequence spans 250 residues: Small ribosomal subunit protein uS2 (250 aa).

Residues 226–250 (DQQNRQELGEDLGAAVEPAAEEALA) are disordered. Positions 239–250 (AAVEPAAEEALA) are enriched in low complexity.

Belongs to the universal ribosomal protein uS2 family.

This is Small ribosomal subunit protein uS2 (rpsB) from Zymomonas mobilis subsp. mobilis (strain ATCC 31821 / ZM4 / CP4).